A 698-amino-acid polypeptide reads, in one-letter code: Elongation factor G 1 (698 aa).

A tr-type G domain is found at 8–290; sequence ERYRNIGICA…AVIEFLPAPV (283 aa). Residues 17-24, 88-92, and 142-145 contribute to the GTP site; these read AHVDAGKT, DTPGH, and NKMD.

Belongs to the TRAFAC class translation factor GTPase superfamily. Classic translation factor GTPase family. EF-G/EF-2 subfamily.

The protein resides in the cytoplasm. In terms of biological role, catalyzes the GTP-dependent ribosomal translocation step during translation elongation. During this step, the ribosome changes from the pre-translocational (PRE) to the post-translocational (POST) state as the newly formed A-site-bound peptidyl-tRNA and P-site-bound deacylated tRNA move to the P and E sites, respectively. Catalyzes the coordinated movement of the two tRNA molecules, the mRNA and conformational changes in the ribosome. The polypeptide is Elongation factor G 1 (Aliivibrio fischeri (strain ATCC 700601 / ES114) (Vibrio fischeri)).